The following is a 330-amino-acid chain: Putative [LysW]-L-2-aminoadipate/[LysW]-L-glutamate phosphate reductase (330 aa).

NADP(+) is bound by residues 10 to 13 (SGYI) and 34 to 36 (SRK). Cys142 is a catalytic residue. Residue Asn297 coordinates NADP(+).

It belongs to the NAGSA dehydrogenase family. Type 1 subfamily. LysY sub-subfamily.

The protein localises to the cytoplasm. It catalyses the reaction [amino-group carrier protein]-C-terminal-N-(1-carboxy-5-oxopentan-1-yl)-L-glutamine + phosphate + NADP(+) = [amino-group carrier protein]-C-terminal-N-(1-carboxy-5-phosphooxy-5-oxopentan-1-yl)-L-glutamine + NADPH + H(+). The catalysed reaction is [amino-group carrier protein]-C-terminal-gamma-(L-glutamyl-5-semialdehyde)-L-glutamate + phosphate + NADP(+) = [amino-group carrier protein]-C-terminal-gamma-(5-phospho-L-glutamyl)-L-glutamate + NADPH + H(+). It participates in amino-acid biosynthesis; L-lysine biosynthesis via AAA pathway; L-lysine from L-alpha-aminoadipate (Thermus route): step 3/5. Its pathway is amino-acid biosynthesis; L-arginine biosynthesis. Functionally, involved in both the arginine and lysine biosynthetic pathways. The protein is Putative [LysW]-L-2-aminoadipate/[LysW]-L-glutamate phosphate reductase of Pyrococcus abyssi (strain GE5 / Orsay).